Reading from the N-terminus, the 354-residue chain is MKAYLHVASGKTFSGELAAPLEEKVSGEIVFFTGMTGYQEVLTDPSYKNQIIVFTYPLIGNYGINENDFESKRPHVEAVVVYEASREGFHYGAKYSLAEYLQHWNIPLLTHVDTRALVKEIRTAGTMMAELSLSPISAVGGVEAVFPVRAVSTRTIETYGEGGPHLVLVDFGYKKSILQSLLARGCRVTVVPHDTAPEAIDALKPDGLVLSNGPGDPKQLRHQLPAIRQLIDRYPTLAICLGHQLVALATGRIRKKLRFGHRGANQPVWDAVKQNVMMTSQNHSYVVKEGSLVGKPFDIRFINVNDGSVEGIVHRHKPILSVQYHPEAHPGPHDTGYIFDEFLQTVFKGENVYA.

Residues 1–163 (MKAYLHVASG…RTIETYGEGG (163 aa)) are CPSase. 3 residues coordinate L-glutamine: S46, G213, and G215. A Glutamine amidotransferase type-1 domain is found at 165–352 (HLVLVDFGYK…LQTVFKGENV (188 aa)). C240 (nucleophile) is an active-site residue. Residues L241, Q244, N282, and Y285 each coordinate L-glutamine. Catalysis depends on residues H325 and E327.

It belongs to the CarA family. As to quaternary structure, composed of two chains; the small (or glutamine) chain promotes the hydrolysis of glutamine to ammonia, which is used by the large (or ammonia) chain to synthesize carbamoyl phosphate. Tetramer of heterodimers (alpha,beta)4.

The enzyme catalyses hydrogencarbonate + L-glutamine + 2 ATP + H2O = carbamoyl phosphate + L-glutamate + 2 ADP + phosphate + 2 H(+). The catalysed reaction is L-glutamine + H2O = L-glutamate + NH4(+). Its pathway is amino-acid biosynthesis; L-arginine biosynthesis; carbamoyl phosphate from bicarbonate: step 1/1. Its function is as follows. Small subunit of the glutamine-dependent carbamoyl phosphate synthetase (CPSase). CPSase catalyzes the formation of carbamoyl phosphate from the ammonia moiety of glutamine, carbonate, and phosphate donated by ATP, constituting the first step of the biosynthetic pathway leading to arginine and/or urea. The small subunit (glutamine amidotransferase) binds and cleaves glutamine to supply the large subunit with the substrate ammonia. The protein is Carbamoyl phosphate synthase arginine-specific small chain of Geobacillus stearothermophilus (Bacillus stearothermophilus).